A 326-amino-acid polypeptide reads, in one-letter code: Malate dehydrogenase (326 aa).

11–17 (GAAGQIG) lines the NAD(+) pocket. The substrate site is built by Arg92 and Arg98. NAD(+) is bound by residues Asn105, Gln112, and 129–131 (VGN). Substrate-binding residues include Asn131 and Arg162. The active-site Proton acceptor is His187.

The protein belongs to the LDH/MDH superfamily. MDH type 2 family.

The enzyme catalyses (S)-malate + NAD(+) = oxaloacetate + NADH + H(+). In terms of biological role, catalyzes the reversible oxidation of malate to oxaloacetate. The sequence is that of Malate dehydrogenase from Leptospira interrogans serogroup Icterohaemorrhagiae serovar Lai (strain 56601).